The chain runs to 441 residues: Arginine biosynthesis bifunctional protein ArgJ, mitochondrial (441 aa).

Threonine 178, lysine 204, threonine 215, glutamate 304, asparagine 436, and serine 441 together coordinate substrate. Threonine 215 functions as the Nucleophile in the catalytic mechanism.

Belongs to the ArgJ family. Heterodimer of an alpha and a beta chain. Post-translationally, the alpha and beta chains are autoproteolytically processed from a single precursor protein within the mitochondrion.

It is found in the mitochondrion matrix. The catalysed reaction is N(2)-acetyl-L-ornithine + L-glutamate = N-acetyl-L-glutamate + L-ornithine. It catalyses the reaction L-glutamate + acetyl-CoA = N-acetyl-L-glutamate + CoA + H(+). The protein operates within amino-acid biosynthesis; L-arginine biosynthesis; L-ornithine and N-acetyl-L-glutamate from L-glutamate and N(2)-acetyl-L-ornithine (cyclic): step 1/1. It functions in the pathway amino-acid biosynthesis; L-arginine biosynthesis; N(2)-acetyl-L-ornithine from L-glutamate: step 1/4. Catalyzes two activities which are involved in the cyclic version of arginine biosynthesis: the synthesis of acetylglutamate from glutamate and acetyl-CoA, and of ornithine by transacetylation between acetylornithine and glutamate. This chain is Arginine biosynthesis bifunctional protein ArgJ, mitochondrial, found in Lodderomyces elongisporus (strain ATCC 11503 / CBS 2605 / JCM 1781 / NBRC 1676 / NRRL YB-4239) (Yeast).